A 220-amino-acid chain; its full sequence is Vesicle-associated membrane protein 7 (220 aa).

The Cytoplasmic portion of the chain corresponds to 2–188 (AILFAVVARG…ARAMCMKNLK (187 aa)). One can recognise a Longin domain in the interval 7–110 (VVARGTTILA…AMNSEFSSVL (104 aa)). One can recognise a v-SNARE coiled-coil homology domain in the interval 125–185 (QVAETQAQVD…RNLARAMCMK (61 aa)). The chain crosses the membrane as a helical; Anchor for type IV membrane protein span at residues 189–209 (LTIIIIIVSIVIIYIIVSAAC). Over 210 to 220 (GGLAWPSCVQK) the chain is Vesicular.

It belongs to the synaptobrevin family.

It is found in the cytoplasmic vesicle. The protein resides in the secretory vesicle membrane. It localises to the golgi apparatus. The protein localises to the trans-Golgi network membrane. Its subcellular location is the late endosome membrane. It is found in the lysosome membrane. The protein resides in the endoplasmic reticulum membrane. It localises to the phagosome membrane. The protein localises to the synapse. Its subcellular location is the synaptosome. Involved in the targeting and/or fusion of transport vesicles to their target membrane during transport of proteins from the early endosome to the lysosome. Required for heterotypic fusion of late endosomes with lysosomes and homotypic lysosomal fusion. Required for calcium regulated lysosomal exocytosis. Involved in the export of chylomicrons from the endoplasmic reticulum to the cis Golgi. Required for focal exocytosis of late endocytic vesicles during phagosome formation. The sequence is that of Vesicle-associated membrane protein 7 from Gallus gallus (Chicken).